The following is a 685-amino-acid chain: Mesothelin-like protein (685 aa).

A signal peptide spans 1–32; that stretch reads MSRTLRPSAMGSRVGALASPGLALLLSLTAHC. At 33–627 the chain is on the extracellular side; that stretch reads SGPQAKGLPK…GVSHTSGSPP (595 aa). N-linked (GlcNAc...) asparagine glycosylation is found at asparagine 315 and asparagine 400. Positions 603-624 are disordered; it reads PPSSLIHSLDPPGNDGVSHTSG. Residues 628–648 form a helical membrane-spanning segment; that stretch reads VHLGYLSLAVALPSSLLWLLL. At 649 to 685 the chain is on the cytoplasmic side; the sequence is CQLPSGQMATAHRTLGPMALAQGSWTPEHQIPEKRSC.

This sequence belongs to the mesothelin family.

The protein localises to the membrane. May play a role in cellular adhesion. The protein is Mesothelin-like protein (Mslnl) of Mus musculus (Mouse).